Reading from the N-terminus, the 541-residue chain is MLANLKIRTGMFWVLSLFSLTLLFSTASAWWAAVGSDQQITELDQTAHQSDRLNNALLMAIRSSANVSSGFIEQLGGHDESAGKRMALSVELNNKSQTLVDEFVENAREPALRVLATELQATFAEYAKAVAGQREATRQRSLEQYFKVNSDAGNAMGRLQTLRQQLVTTLSERGQQIMLESDRRLARAQLLSLCLLGMTVVLAVLCWAFIAQRVLHPLREAGGHFRRIASGDLSVPVQGQGNNEIGQLFHELQRMQQSQRDTLGQINNCARQLDAAASALNAVTEESANNLRQQGQELEQAATAVTEMTTAVEEVARNAITTSQTTSESNQLAAQSRRQVSENIDGTEAMTREIQTSSAHLQQLVGQVRDIGKVLEVIRSVSEQTNLLALNAAIEAARAGEAGRGFAVVADEVRTLAYRTQQSTQEIEQMIGSVQAGTEAAVASMQASTNRAQSTLDVTLASGQVLEGIYSAIGEINERNLVIASAAEEQAQVAREVDRNLLNIRELSNHSAAGAQQTSEASKALSGLVGEMTALVGRFKV.

The Cytoplasmic portion of the chain corresponds to M1–G10. The helical transmembrane segment at M11–W31 threads the bilayer. Over A32–Q189 the chain is Periplasmic. The segment at G35–R187 is ligand-binding domain. Residues L190–I210 traverse the membrane as a helical segment. The Cytoplasmic segment spans residues A211 to V541. An HAMP domain is found at Q212–G264. The Methyl-accepting transducer domain maps to C269–R505. Positions T322 to S341 are disordered.

This sequence belongs to the methyl-accepting chemotaxis (MCP) protein family.

The protein localises to the cell inner membrane. Functionally, chemotactic-signal transducers respond to changes in the concentration of attractants and repellents in the environment, transduce a signal from the outside to the inside of the cell, and facilitate sensory adaptation through the variation of the level of methylation. PcaY is responsible for the detection of multiple aromatic and hydroaromatic compounds that are metabolized through the beta-ketoadipate catabolic pathway, including vanillin, vanillate, 4-hydroxybenzoate (4-HBA), benzoate and protocatechuate. It also senses several nonmetabolizable aromatic compounds. The polypeptide is Methyl-accepting chemotaxis protein PcaY (Pseudomonas putida (strain ATCC 700007 / DSM 6899 / JCM 31910 / BCRC 17059 / LMG 24140 / F1)).